The sequence spans 305 residues: UPF0282 protein Tneu_0934 (305 aa).

The protein belongs to the UPF0282 family.

This is UPF0282 protein Tneu_0934 from Pyrobaculum neutrophilum (strain DSM 2338 / JCM 9278 / NBRC 100436 / V24Sta) (Thermoproteus neutrophilus).